A 267-amino-acid chain; its full sequence is Pro-opiomelanocortin (267 aa).

A signal peptide spans Met-1–Gly-26. The cysteines at positions 28 and 50 are disulfide-linked. The O-linked (HexNAc...) threonine glycan is linked to Thr-71. Phe-87 bears the Phenylalanine amide mark. Disordered stretches follow at residues Gly-88 to Glu-175, Thr-181 to Gly-200, and Arg-222 to Met-241. N-linked (GlcNAc...) asparagine glycosylation occurs at Asn-91. The span at Pro-121–Arg-145 shows a compositional bias: basic and acidic residues. Position 134 is a glutamic acid 1-amide (Glu-134). Ser-138 is subject to N-acetylserine; in Corticotropin. Position 150 is a valine amide (Val-150). Ser-168 is modified (phosphoserine). Over residues Arg-222–Tyr-237 the composition is skewed to basic and acidic residues.

Belongs to the POMC family. In terms of processing, specific enzymatic cleavages at paired basic residues yield the different active peptides. O-glycosylated; reducing sugar is probably N-acetylgalactosamine. As to expression, ACTH and MSH are produced by the pituitary gland.

It localises to the secreted. In terms of biological role, stimulates the adrenal glands to release cortisol. Anorexigenic peptide. Increases the pigmentation of skin by increasing melanin production in melanocytes. Functionally, increases the pigmentation of skin by increasing melanin production in melanocytes. Its function is as follows. Endogenous orexigenic opiate. In terms of biological role, endogenous opiate. The chain is Pro-opiomelanocortin (POMC) from Homo sapiens (Human).